Here is a 120-residue protein sequence, read N- to C-terminus: Dihydroneopterin aldolase (120 aa).

Substrate is bound by residues Glu21, Tyr53, and 72 to 73 (VE). The active-site Proton donor/acceptor is the Lys99.

The protein belongs to the DHNA family.

The catalysed reaction is 7,8-dihydroneopterin = 6-hydroxymethyl-7,8-dihydropterin + glycolaldehyde. It participates in cofactor biosynthesis; tetrahydrofolate biosynthesis; 2-amino-4-hydroxy-6-hydroxymethyl-7,8-dihydropteridine diphosphate from 7,8-dihydroneopterin triphosphate: step 3/4. Functionally, catalyzes the conversion of 7,8-dihydroneopterin to 6-hydroxymethyl-7,8-dihydropterin. The protein is Dihydroneopterin aldolase (folB) of Bacillus subtilis (strain 168).